The sequence spans 217 residues: MDYQNRAGVRFGGGGVAGYQETNAARRERLRKLALETIDLSKDPYLMKNHLGTFECRLCLTTHANENSYLTHTQGKKHQTNLARRQALENKKSQENAPQVLLGISQSHVQVKKSVVKIGRPGYKVSKIREAESGKFGLRFQIKYPDIEVNAKPRYRIMSAYEQRVEAPDRKFQYLVVAAEPYESIAFKIDRAPGKFWSYWDAPTYTIQFFYNLTKIS.

Residues 54–84 (FECRLCLTTHANENSYLTHTQGKKHQTNLAR) form a Matrin-type zinc finger.

It belongs to the SF3A2 family. Belongs to the 40S cdc5-associated complex (or cwf complex), a spliceosome sub-complex reminiscent of a late-stage spliceosome composed of the U2, U5 and U6 snRNAs and at least brr2, cdc5, cwf2/prp3, cwf3/syf1, cwf4/syf3, cwf5/ecm2, spp42/cwf6, cwf7/spf27, cwf8, cwf9, cwf10, cwf11, cwf12, prp45/cwf13, cwf14, cwf15, cwf16, cwf17, cwf18, cwf19, cwf20, cwf21, cwf22, cwf23, cwf24, cwf25, cwf26, cyp7/cwf27, cwf28, cwf29/ist3, lea1, msl1, prp5/cwf1, prp10, prp12/sap130, prp17, prp22, sap61, sap62, sap114, sap145, slu7, smb1, smd1, smd3, smf1, smg1 and syf2.

The protein resides in the nucleus. It is found in the cytoplasm. In terms of biological role, involved in mRNA splicing where it associates with cdc5 and the other cwf proteins as part of the spliceosome. This chain is Pre-mRNA-splicing factor sap62 (sap62), found in Schizosaccharomyces pombe (strain 972 / ATCC 24843) (Fission yeast).